Here is a 338-residue protein sequence, read N- to C-terminus: Tryptophan--tRNA ligase (338 aa).

ATP is bound by residues 12 to 14 (QPT) and 20 to 21 (GN). The 'HIGH' region motif lies at 13 to 21 (PTGDLHIGN). D136 serves as a coordination point for L-tryptophan. ATP contacts are provided by residues 148-150 (GED), I191, and 200-204 (KMSKS). The 'KMSKS' region signature appears at 200 to 204 (KMSKS).

This sequence belongs to the class-I aminoacyl-tRNA synthetase family. As to quaternary structure, homodimer.

Its subcellular location is the cytoplasm. It catalyses the reaction tRNA(Trp) + L-tryptophan + ATP = L-tryptophyl-tRNA(Trp) + AMP + diphosphate + H(+). Catalyzes the attachment of tryptophan to tRNA(Trp). This chain is Tryptophan--tRNA ligase, found in Prochlorococcus marinus subsp. pastoris (strain CCMP1986 / NIES-2087 / MED4).